The sequence spans 132 residues: D-ribose pyranase (132 aa).

His-20 serves as the catalytic Proton donor. Residues Asp-28, His-99, and 121–123 (YAN) contribute to the substrate site.

It belongs to the RbsD / FucU family. RbsD subfamily. Homodecamer.

Its subcellular location is the cytoplasm. The enzyme catalyses beta-D-ribopyranose = beta-D-ribofuranose. It participates in carbohydrate metabolism; D-ribose degradation; D-ribose 5-phosphate from beta-D-ribopyranose: step 1/2. In terms of biological role, catalyzes the interconversion of beta-pyran and beta-furan forms of D-ribose. The sequence is that of D-ribose pyranase from Variovorax paradoxus (strain S110).